The sequence spans 282 residues: ATP synthase gamma chain (282 aa).

It belongs to the ATPase gamma chain family. As to quaternary structure, F-type ATPases have 2 components, CF(1) - the catalytic core - and CF(0) - the membrane proton channel. CF(1) has five subunits: alpha(3), beta(3), gamma(1), delta(1), epsilon(1). CF(0) has three main subunits: a, b and c.

The protein resides in the cell membrane. Functionally, produces ATP from ADP in the presence of a proton gradient across the membrane. The gamma chain is believed to be important in regulating ATPase activity and the flow of protons through the CF(0) complex. This chain is ATP synthase gamma chain, found in Clostridium botulinum (strain Kyoto / Type A2).